The sequence spans 180 residues: Large ribosomal subunit protein uL16 (180 aa).

It belongs to the universal ribosomal protein uL16 family.

This is Large ribosomal subunit protein uL16 from Hyperthermus butylicus (strain DSM 5456 / JCM 9403 / PLM1-5).